The sequence spans 352 residues: Methylthioribose-1-phosphate isomerase (352 aa).

Substrate is bound by residues 49–51, R93, and Q202; that span reads RGA. D243 functions as the Proton donor in the catalytic mechanism. 253–254 provides a ligand contact to substrate; that stretch reads NK.

It belongs to the eIF-2B alpha/beta/delta subunits family. MtnA subfamily.

It carries out the reaction 5-(methylsulfanyl)-alpha-D-ribose 1-phosphate = 5-(methylsulfanyl)-D-ribulose 1-phosphate. The protein operates within amino-acid biosynthesis; L-methionine biosynthesis via salvage pathway; L-methionine from S-methyl-5-thio-alpha-D-ribose 1-phosphate: step 1/6. Functionally, catalyzes the interconversion of methylthioribose-1-phosphate (MTR-1-P) into methylthioribulose-1-phosphate (MTRu-1-P). This is Methylthioribose-1-phosphate isomerase from Magnetococcus marinus (strain ATCC BAA-1437 / JCM 17883 / MC-1).